The primary structure comprises 457 residues: Peptidyl-prolyl cis-trans isomerase FKBP5 (457 aa).

An N-acetylmethionine modification is found at methionine 1. Positions 1–26 are disordered; sequence MTTDEGAKNSGESPTATVAEQGEDIT. At serine 13 the chain carries Phosphoserine. Lysine 28 bears the N6-acetyllysine mark. The region spanning 50–138 is the PPIase FKBP-type 1 domain; the sequence is GDKVYVHYKG…FFEIELLDFK (89 aa). At lysine 155 the chain carries N6-acetyllysine. The 87-residue stretch at 165 to 251 folds into the PPIase FKBP-type 2 domain; the sequence is GATVEIHLEG…IYEVTLKSFE (87 aa). TPR repeat units lie at residues 268–301, 317–350, and 351–384; these read AAIVKEKGTVYFKGGKYMRAVIQYGKIVSWLEME, LAAFLNLAMCYLKLREYTKAVECCDKALGLDSAN, and EKGLYRRGEAQLLMNEFESAKGDFEKVLEVNPQN. Positions 421–457 are disordered; that stretch reads AKEEANKAMGKKTSEGVTNEKGTDSSAVEEEKAEGHV. At serine 445 the chain carries Phosphoserine.

As to quaternary structure, part of a heteromultimeric cytoplasmic complex with HSP90AA1, HSPA1A/HSPA1B and steroid receptors. Upon ligand binding dissociates from the complex and FKBP4 takes its place. Interacts with functionally mature heterooligomeric progesterone receptor complexes along with HSP90 and TEBP. Interacts with NR3C1. Interacts with Akt/AKT1 and PHLPP1; enhancing dephosphorylation and subsequent activation of Akt/AKT1. Interacts with IFI44L; this interaction modulates the kinase activity of IKBKB and IKBKE. Interacts with IKBKB and IKBKE. Acetylation impairs ability to promote interaction between Akt/AKT1 and PHLPP1. Deacetylation by SIRT7 promotes interaction between Akt/AKT1 and PHLPP1, leading to suppress Akt/AKT1 activation. In terms of processing, ubiquitinated, leading to degradation in a proteasome-dependent manner. Deubiquitinated by USP49, leading to stabilization.

It is found in the cytoplasm. Its subcellular location is the nucleus. The enzyme catalyses [protein]-peptidylproline (omega=180) = [protein]-peptidylproline (omega=0). With respect to regulation, inhibited by both FK506 and rapamycin. Immunophilin protein with PPIase and co-chaperone activities. Component of unligated steroid receptors heterocomplexes through interaction with heat-shock protein 90 (HSP90). Plays a role in the intracellular trafficking of heterooligomeric forms of steroid hormone receptors maintaining the complex into the cytoplasm when unliganded. Acts as a regulator of Akt/AKT1 activity by promoting the interaction between Akt/AKT1 and PHLPP1, thereby enhancing dephosphorylation and subsequent activation of Akt/AKT1. Interacts with IKBKE and IKBKB which facilitates IKK complex assembly leading to increased IKBKE and IKBKB kinase activity, NF-kappaB activation, and IFN production. The polypeptide is Peptidyl-prolyl cis-trans isomerase FKBP5 (FKBP5) (Chlorocebus aethiops (Green monkey)).